The sequence spans 68 residues: Sec-independent protein translocase protein TatA (68 aa).

Residues 1–21 (MGSFSIWHWLIVLVVVLLLFG) traverse the membrane as a helical segment. The disordered stretch occupies residues 46–68 (EEAASADKTIDGKTVEHKSDEVR). Over residues 53–68 (KTIDGKTVEHKSDEVR) the composition is skewed to basic and acidic residues.

This sequence belongs to the TatA/E family. As to quaternary structure, the Tat system comprises two distinct complexes: a TatABC complex, containing multiple copies of TatA, TatB and TatC subunits, and a separate TatA complex, containing only TatA subunits. Substrates initially bind to the TatABC complex, which probably triggers association of the separate TatA complex to form the active translocon.

It localises to the cell inner membrane. Part of the twin-arginine translocation (Tat) system that transports large folded proteins containing a characteristic twin-arginine motif in their signal peptide across membranes. TatA could form the protein-conducting channel of the Tat system. The protein is Sec-independent protein translocase protein TatA of Sinorhizobium fredii (strain NBRC 101917 / NGR234).